The primary structure comprises 163 residues: 3-isopropylmalate dehydratase small subunit (163 aa).

Belongs to the LeuD family. LeuD type 2 subfamily. Heterodimer of LeuC and LeuD.

It carries out the reaction (2R,3S)-3-isopropylmalate = (2S)-2-isopropylmalate. It participates in amino-acid biosynthesis; L-leucine biosynthesis; L-leucine from 3-methyl-2-oxobutanoate: step 2/4. Its function is as follows. Catalyzes the isomerization between 2-isopropylmalate and 3-isopropylmalate, via the formation of 2-isopropylmaleate. The chain is 3-isopropylmalate dehydratase small subunit from Clostridioides difficile (strain 630) (Peptoclostridium difficile).